A 176-amino-acid chain; its full sequence is Ribosome maturation factor RimM (176 aa).

The 81-residue stretch at 96–176 (PADEFYWRDL…QILVDWDPDF (81 aa)) folds into the PRC barrel domain.

Belongs to the RimM family. As to quaternary structure, binds ribosomal protein uS19.

Its subcellular location is the cytoplasm. In terms of biological role, an accessory protein needed during the final step in the assembly of 30S ribosomal subunit, possibly for assembly of the head region. Essential for efficient processing of 16S rRNA. May be needed both before and after RbfA during the maturation of 16S rRNA. It has affinity for free ribosomal 30S subunits but not for 70S ribosomes. The protein is Ribosome maturation factor RimM of Shewanella baltica (strain OS223).